Reading from the N-terminus, the 466-residue chain is ATP synthase subunit beta (466 aa).

G156–T163 is an ATP binding site.

Belongs to the ATPase alpha/beta chains family. As to quaternary structure, F-type ATPases have 2 components, CF(1) - the catalytic core - and CF(0) - the membrane proton channel. CF(1) has five subunits: alpha(3), beta(3), gamma(1), delta(1), epsilon(1). CF(0) has three main subunits: a(1), b(2) and c(9-12). The alpha and beta chains form an alternating ring which encloses part of the gamma chain. CF(1) is attached to CF(0) by a central stalk formed by the gamma and epsilon chains, while a peripheral stalk is formed by the delta and b chains.

Its subcellular location is the cell inner membrane. The catalysed reaction is ATP + H2O + 4 H(+)(in) = ADP + phosphate + 5 H(+)(out). Produces ATP from ADP in the presence of a proton gradient across the membrane. The catalytic sites are hosted primarily by the beta subunits. The polypeptide is ATP synthase subunit beta (Polynucleobacter necessarius subsp. necessarius (strain STIR1)).